Here is a 165-residue protein sequence, read N- to C-terminus: UI (165 aa).

Positions 1-18 (MKPVPLILLLATVLLSSH) are cleaved as a signal peptide. V163 carries the valine amide modification.

The protein belongs to the sauvagine/corticotropin-releasing factor/urotensin I family.

The protein resides in the secreted. Functionally, urotensin is found in the teleost caudal neurosecretory system. It has a suggested role in osmoregulation and as a corticotropin-releasing factor. The non-hormonal portion of this precursor may be a urotensin binding protein, urophysin. This Oncorhynchus mykiss (Rainbow trout) protein is UI.